The primary structure comprises 290 residues: Alpha-mannosidase (290 aa).

The active-site Nucleophile is aspartate 17. N-linked (GlcNAc...) asparagine glycosylation occurs at asparagine 64.

This sequence belongs to the glycosyl hydrolase 38 family. Dimer. Requires Zn(2+) as cofactor.

It catalyses the reaction Hydrolysis of terminal, non-reducing alpha-D-mannose residues in alpha-D-mannosides.. With respect to regulation, inhibited by swainsonine but not by 1-desoxymannojirimycin. Its function is as follows. Liberates mannose from p-nitrophenyl-alpha-D-mannoside. The chain is Alpha-mannosidase from Lablab purpureus (Hyacinth bean).